The sequence spans 2284 residues: MWQISEGSQCCCTGKTWSNAEAKEARYVCNCILSCRLVKVEVVPQLPKSRIAPAQDKAERITPLCNSNGGAAPTIPKSKRAFEPRTPLIKQRCDVVVRVGPPADLDLVYPALVQEEVAIPPTEKVLQPTLKAEVRVPIFCAPKRMVAFPKPPTKIASKRDALQFPAGAVAFNGINFIDAKGKVVLSEGAKRILKGIRVAKQQRQRTARRSAACKKVRKARDLALFKRLSEECTFQDLPGGFAGEIPAGHACYRKVAAPTTSFKKEVSKGKKAKKPSTPVLPAQDFSCVDSFDWGEKSSPVEIEDDWVLIEKPVLQRQAAHSAQGRATEALTRFAASGGFTVKAHQKVEELASSGEAGHLIAGEFAELCLRSLVYNDAPVLSASIEELITEQDFKDAIELFNIELAELPTDSTTCGQFNDWASAAKKMAKGVGSIVGDFARMSGAGVLITFDRCIEYLQKKALTFCQKVFNATMAPYLSHLAEASNIISKIWKKLAEWMESLKGKAGLALEVLAQHAIFALGAIVVGGVVVLVEKVLVACKVIPNCGIVLGAFLTLFFASLGLTALECTAEEIFRMHQCCKGAIYSMYSVKEPMNEAEGSSVTMGVLQGLDNAISALTRVGQSMISFKLGSFSYYAKIAQGFDQLARGKKAIGELTGWLIDLVGGVYSKVSGQESTFFDELSTIVCLDVRSWLLKSKRVRLQVETMAIGDRITLDTISKPTGMQGHKILITAAGVPRKTSADFTMCIKEEVSKLEEVHQRTACAGINEGMRQFPFWVYIFGASQSGKTTIANSVIIPSLLEEMNLPKTSVYSRPKTGGFWSGYARQACVKVDDFYAIEQTPSLASSMIDVVNSEPYPLDMAYLHEKGMSMDSPLVVTTANTVKPPTNAGITDEASFFNRRAAVIEVRRKDNTHFTPRAYDNCIEVRFLHNKCAYVDSEGIPQGPAVNTPMEEGWISPSEAVATLKNLLGEHVLAEEEKLLDYRERIGNDHPIYNAAQEFIGNMHYPGQWLTTEQKNTYGINEEGFSFLAVDGKMYKYNVLGKLNPCETVPPHPNVIPWLEEKTLSIVHWDAHKHIATGPRNALVSCFLQGLVQDQSRVQSVDLMGKDSSPEQQAFFKRLTLSERIYLRLCQIRIDAVKKEQLSSVSRGALDVLRDCMYKSKAKLVENYSLLLTLVAILVLIATAYSLISTLIGLAGCSSFAGGMVALNHVSNASIPCSEPRLEEGYIPRNKFVSRISRTRGDGPAQGQGDHEELVTELYYYFDGVKRLISCCWFKGRSLLLTRHQAMAIPIGNEIQVIYADGTERKLVWPGRQEDRSCKGYIEFPDNELVVFEHARLLTMPIKYEKFFVDDPDHQISPNVAVKCCVARLEDGIPQFHFWNKYASARSDVHTIKDEGGSAVYQNKIRRYIIYAHEAKRNDCGAIAVAEIQRTPKVLAMLVSGIGNVTYSSVIPSYSSSFVRGDVPYVPEDGIKTNGYRKVGYLMAKDAPHVPSKTAFMKVPDEICFPYPNPKQPAILSAEDERLIGTVHEGYTPIREGMKKFAEPMHLLDAQLLDEVAGDMVHTWFDAGEILEDVPLSIAINGDVEEEYFDPIAMDTSEGYPEVLQRKNGEKGKARFFVGEPGAREFVPGCGPERAYLSLEEECKTRIPSLVSIETPKDERLKRSKIETPGTRLFSVLPLAYNLLLRVKFLSFSRLLMKKRSHLPCQVGINPYSREWTDLYHRLAEKSDVGYNCDYKGFDGLITEQILAVVATMINAGFRNPVSNQQRSNLLMAISGRLSICGSQVYETEAGIPSGCALTVVINSIFNELLMRYCYKKIVPPIYRECFDRCVVLITYGDDNVFTVSQSIMTSFTGDALKAEMANLGVTITDGKDKSLATIPARPLLELEFLKRGFKKGNGGLIYAPLEKLSIMSSLVYIRSDGSDMLQKLVDNVNTALVELYLHQDREYSESVRDFYLEKLPPGSYKELTTWYEAQIFHECQLSGESGWKPQGLIEVSHGASFASFVQQNGTELERHDICPGLAISGSKYIAREEEILMSLSSLLPGDINAVKLTLKCGDGIGRLPSKASVLSQRKPGIVMQLCARAIKEKKTLVIRDERPYIGGWAMACICGESFGFSIKDTLALYANLMGPNRKNGLATYFTDFDSPVHVKKIHAITNGEEGVAMLKDSFAFCEPTTIAATSCDTRKEMVSHLPTSFPNIVLIGGISYPKEGGEPGALYSPTDVVMSKKLQGVYVSEAVLKCCLRCPGAAVKTVLQTSSPGSSLSQAHFRSLRRVQSHRCMRKS.

The Cytoplasmic segment spans residues 567 to 1172 (CTAEEIFRMH…LVENYSLLLT (606 aa)). The region spanning 750–918 (VSKLEEVHQR…DNTHFTPRAY (169 aa)) is the SF3 helicase domain. An ATP-binding site is contributed by 780 to 787 (GASQSGKT). The helical transmembrane segment at 1173–1193 (LVAILVLIATAYSLISTLIGL) threads the bilayer. At 1194–1216 (AGCSSFAGGMVALNHVSNASIPC) the chain is on the lumenal side. An O-(5'-phospho-RNA)-serine modification is found at S1217. Residues 1242–1457 (GPAQGQGDHE…SVIPSYSSSF (216 aa)) enclose the Peptidase C3 domain. Residues H1283, E1327, and C1419 each act as for picornain 3C-like protease activity in the active site. In terms of domain architecture, RdRp catalytic spans 1727 to 1851 (DVGYNCDYKG…TVSQSIMTSF (125 aa)).

Belongs to the nepoviruses RNA1 polyprotein family. In terms of processing, specific enzymatic cleavages by picornain 3C-like protease in vivo yield mature proteins. Picornain 3C-like protease is autocatalytically processed. VPg is uridylylated by the polymerase and is covalently linked to the 5'-end of genomic RNA. This uridylylated form acts as a nucleotide-peptide primer for the polymerase.

The protein resides in the host endoplasmic reticulum lumen. Its subcellular location is the host endoplasmic reticulum membrane. The enzyme catalyses RNA(n) + a ribonucleoside 5'-triphosphate = RNA(n+1) + diphosphate. Functionally, picornain 3C-like protease is a thiol protease that cleaves the P1 and P2 polyproteins. This Vitis vinifera (Grape) protein is RNA1 polyprotein.